The primary structure comprises 251 residues: tRNA (guanine-N(1)-)-methyltransferase (251 aa).

S-adenosyl-L-methionine contacts are provided by residues Gly-114 and 134–139 (IGDYVL).

It belongs to the RNA methyltransferase TrmD family. As to quaternary structure, homodimer.

It localises to the cytoplasm. It catalyses the reaction guanosine(37) in tRNA + S-adenosyl-L-methionine = N(1)-methylguanosine(37) in tRNA + S-adenosyl-L-homocysteine + H(+). In terms of biological role, specifically methylates guanosine-37 in various tRNAs. This is tRNA (guanine-N(1)-)-methyltransferase from Pelotomaculum thermopropionicum (strain DSM 13744 / JCM 10971 / SI).